Consider the following 390-residue polypeptide: Homeobox protein Meis1 (390 aa).

One can recognise an MEIS N-terminal domain in the interval 108 to 192 (GGDVCSSESF…IDLVIDDREG (85 aa)). The segment covering 190-202 (REGGSKSDSEDVT) has biased composition (basic and acidic residues). Residues 190-279 (REGGSKSDSE…KKRHKKRGIF (90 aa)) form a disordered region. A compositionally biased stretch (polar residues) spans 203 to 213 (RSANLTDQPSW). A DNA-binding region (homeobox; TALE-type) is located at residues 272-334 (RHKKRGIFPK…NARRRIVQPM (63 aa)). The segment at 299-329 (YPSEEQKKQLAQDTGLTILQVNNWFINARRR) is interaction with DNA. Positions 335-390 (IDQSNRAVSQGTPYNPDGQPMGGFVMDGQQHMGIRAPGPMSGMGMNMGMEGQWHYM) are required for transcriptional activation.

The protein belongs to the TALE/MEIS homeobox family. As to quaternary structure, interacts with the N-terminal region of PBX1 to form a heterodimer which binds DNA including a cAMP-responsive sequence in CYP17. Also forms heterodimers with PBX2. Forms heterotrimers with PBX1 or PBX2 and a number of HOX proteins including HOXA9, HOXD4 and HOXD9 where it acts as a non-DNA-binding partner. Also forms heterotrimers with PBX1 and HOX proteins including HOXD9 and HOXD10 where PBX1 is the non-DNA-binding partner. Heterodimer with DLX3. Heterodimer with HOXB13. Expressed at high levels in the lung with lower levels detected in the heart and brain. Expressed in pancreatic islets (beta-cells and non-beta-cells).

It is found in the nucleus. Its function is as follows. Acts as a transcriptional regulator of PAX6. Also acts as a transcriptional activator of PF4 in complex with PBX1 or PBX2. Required for hematopoiesis, megakaryocyte lineage development and vascular patterning. May function as a cofactor for HOXA7 and HOXA9 in the induction of myeloid leukemias. The protein is Homeobox protein Meis1 (Meis1) of Mus musculus (Mouse).